We begin with the raw amino-acid sequence, 631 residues long: Transforming acidic coiled-coil-containing protein 3 (631 aa).

At S2 the chain carries N-acetylserine. S39 bears the Phosphoserine mark. A compositionally biased stretch (polar residues) spans 42-59 (ENVPPQSQAKATNVTFQT). A disordered region spans residues 42 to 70 (ENVPPQSQAKATNVTFQTPPRDPQTHRIL). S71 carries the phosphoserine modification. Necessary but not sufficient for spindle localization stretches follow at residues 311–366 (EESF…PMPV) and 384–631 (KPTE…MEKI). The residue at position 347 (S347) is a Phosphoserine; by AURKA. A disordered region spans residues 363–385 (PMPVAPITNSTQDTEEESGSGKP). Residues 431–630 (QKDLDAVVNV…CDDLISKMEK (200 aa)) adopt a coiled-coil conformation.

Belongs to the TACC family. In terms of assembly, interacts with GCN5L2 and PCAF. The coiled coil C-terminal region interacts with AH receptor nuclear translocator protein (ARNT) and ARNT2. Interacts with CCDC100/CEP120. Interacts with CKAP5 independently of clathrin. Interacts with CKAP5 and clathrin forming the TACC3/ch-TOG/clathrin complex located at spindle inter-microtubules bridges; TACC3 (phosphorylated at Ser-347 by AURKA) and CLTC are proposed to form a composite microtubule interaction surface. In terms of tissue distribution, embryonically expressed.

The protein resides in the cytoplasm. It is found in the cytoskeleton. It localises to the microtubule organizing center. Its subcellular location is the centrosome. The protein localises to the spindle pole. Plays a role in the microtubule-dependent coupling of the nucleus and the centrosome. Involved in the processes that regulate centrosome-mediated interkinetic nuclear migration (INM) of neural progenitors. Acts as a component of the TACC3/ch-TOG/clathrin complex proposed to contribute to stabilization of kinetochore fibers of the mitotic spindle by acting as inter-microtubule bridge. The TACC3/ch-TOG/clathrin complex is required for the maintenance of kinetochore fiber tension. May be involved in the control of cell growth and differentiation. May have a role in embryonic development. The chain is Transforming acidic coiled-coil-containing protein 3 (Tacc3) from Mus musculus (Mouse).